A 225-amino-acid chain; its full sequence is 2-C-methyl-D-erythritol 4-phosphate cytidylyltransferase (225 aa).

Belongs to the IspD/TarI cytidylyltransferase family. IspD subfamily.

It catalyses the reaction 2-C-methyl-D-erythritol 4-phosphate + CTP + H(+) = 4-CDP-2-C-methyl-D-erythritol + diphosphate. Its pathway is isoprenoid biosynthesis; isopentenyl diphosphate biosynthesis via DXP pathway; isopentenyl diphosphate from 1-deoxy-D-xylulose 5-phosphate: step 2/6. Its function is as follows. Catalyzes the formation of 4-diphosphocytidyl-2-C-methyl-D-erythritol from CTP and 2-C-methyl-D-erythritol 4-phosphate (MEP). The protein is 2-C-methyl-D-erythritol 4-phosphate cytidylyltransferase of Chromobacterium violaceum (strain ATCC 12472 / DSM 30191 / JCM 1249 / CCUG 213 / NBRC 12614 / NCIMB 9131 / NCTC 9757 / MK).